The sequence spans 101 residues: MENLAELPSPWFVYLVRCANNALYCGITTDVSRRFAQHQKGRGAKALRGKGPLELVWSLPVADGKSAALKLEYRIKALSKSQKEALVAGMARIDQLEIIFQ.

A GIY-YIG domain is found at 9–85 (SPWFVYLVRC…KALSKSQKEA (77 aa)).

Belongs to the UPF0213 family.

The sequence is that of UPF0213 protein VC_A0739 from Vibrio cholerae serotype O1 (strain ATCC 39315 / El Tor Inaba N16961).